The following is a 337-amino-acid chain: Neurogenic differentiation factor 6 (337 aa).

Positions 28 to 80 (QKQIKKPESFPKQVVLRGKSIKRAPGEETEKEEEEEDREEEDENGLSRRRGLR) are disordered. Over residues 54 to 71 (EETEKEEEEEDREEEDEN) the composition is skewed to acidic residues. The short motif at 80–86 (RKKKTTK) is the Nuclear localization signal element. Residues 94–146 (FRRQEANARERNRMHGLNDALDNLRKVVPCYSKTQKLSKIETLRLAKNYIWAL) form the bHLH domain.

In terms of assembly, efficient DNA binding requires dimerization with another bHLH protein. In terms of tissue distribution, specific to the nervous system of both embryos and adults. Highest levels in the cortical plate of the cerebrum.

It is found in the nucleus. Activates E box-dependent transcription in collaboration with TCF3/E47. May be a trans-acting factor involved in the development and maintenance of the mammalian nervous system. Transactivates the promoter of its own gene. This chain is Neurogenic differentiation factor 6 (Neurod6), found in Mus musculus (Mouse).